The primary structure comprises 346 residues: Phosphoribosylformylglycinamidine cyclo-ligase (346 aa).

The protein belongs to the AIR synthase family.

It is found in the cytoplasm. The catalysed reaction is 2-formamido-N(1)-(5-O-phospho-beta-D-ribosyl)acetamidine + ATP = 5-amino-1-(5-phospho-beta-D-ribosyl)imidazole + ADP + phosphate + H(+). It participates in purine metabolism; IMP biosynthesis via de novo pathway; 5-amino-1-(5-phospho-D-ribosyl)imidazole from N(2)-formyl-N(1)-(5-phospho-D-ribosyl)glycinamide: step 2/2. The sequence is that of Phosphoribosylformylglycinamidine cyclo-ligase from Prochlorococcus marinus (strain NATL1A).